A 261-amino-acid polypeptide reads, in one-letter code: tRNA U34 carboxymethyltransferase (261 aa).

Carboxy-S-adenosyl-L-methionine is bound by residues K25, W39, K44, G63, 114–115 (VE), Y135, and R250.

Belongs to the class I-like SAM-binding methyltransferase superfamily. CmoB family. Homotetramer.

It catalyses the reaction carboxy-S-adenosyl-L-methionine + 5-hydroxyuridine(34) in tRNA = 5-carboxymethoxyuridine(34) in tRNA + S-adenosyl-L-homocysteine + H(+). In terms of biological role, catalyzes carboxymethyl transfer from carboxy-S-adenosyl-L-methionine (Cx-SAM) to 5-hydroxyuridine (ho5U) to form 5-carboxymethoxyuridine (cmo5U) at position 34 in tRNAs. The sequence is that of tRNA U34 carboxymethyltransferase from Helicobacter pylori (strain J99 / ATCC 700824) (Campylobacter pylori J99).